Reading from the N-terminus, the 112-residue chain is MSYRKLGRPSDQRRAMLRNLVTDFLRYERITTTEARAKEVRKIAEKMITLGKRGDLHARRQALAYILDESVVKKLFDDIAPRYKERNGGYTRIFKLGPRRGDGAPLAVIELV.

It belongs to the bacterial ribosomal protein bL17 family. As to quaternary structure, part of the 50S ribosomal subunit. Contacts protein L32.

This Caldanaerobacter subterraneus subsp. tengcongensis (strain DSM 15242 / JCM 11007 / NBRC 100824 / MB4) (Thermoanaerobacter tengcongensis) protein is Large ribosomal subunit protein bL17.